We begin with the raw amino-acid sequence, 144 residues long: MKLLKGVDCTSCCIAIVIARFNSFINENLLSGAINALQRKGQVKAENITVIRCPGAYELPLAAQQIAKQGNYDAIIAIGAVIRGGTPHFDFVAGECNKGLAQVALEYQTPVAFGVLTVDSIEQAIERAGTKMGNKGEEAALSAL.

5-amino-6-(D-ribitylamino)uracil-binding positions include Phe-21, Ala-56–Glu-58, and Ala-80–Ile-82. Position 85-86 (Gly-85–Thr-86) interacts with (2S)-2-hydroxy-3-oxobutyl phosphate. The active-site Proton donor is the His-88. A 5-amino-6-(D-ribitylamino)uracil-binding site is contributed by Phe-113. Arg-127 is a binding site for (2S)-2-hydroxy-3-oxobutyl phosphate.

This sequence belongs to the DMRL synthase family. As to quaternary structure, forms an icosahedral capsid composed of 60 subunits, arranged as a dodecamer of pentamers.

The enzyme catalyses (2S)-2-hydroxy-3-oxobutyl phosphate + 5-amino-6-(D-ribitylamino)uracil = 6,7-dimethyl-8-(1-D-ribityl)lumazine + phosphate + 2 H2O + H(+). It participates in cofactor biosynthesis; riboflavin biosynthesis; riboflavin from 2-hydroxy-3-oxobutyl phosphate and 5-amino-6-(D-ribitylamino)uracil: step 1/2. Functionally, catalyzes the formation of 6,7-dimethyl-8-ribityllumazine by condensation of 5-amino-6-(D-ribitylamino)uracil with 3,4-dihydroxy-2-butanone 4-phosphate. This is the penultimate step in the biosynthesis of riboflavin. The protein is 6,7-dimethyl-8-ribityllumazine synthase (ribH) of Photobacterium leiognathi.